The chain runs to 291 residues: Beta-lactamase CTX-M-97 (291 aa).

Positions 1 to 28 (MMTQSIGRSMLTVMATLPLLFSSATLHA) are cleaved as a signal peptide. Residue Ser-73 is the Acyl-ester intermediate of the active site. 237-239 (KTG) contacts substrate.

It belongs to the class-A beta-lactamase family.

The catalysed reaction is a beta-lactam + H2O = a substituted beta-amino acid. Is probably capable of hydrolyzing cephalosporins such as ceftriaxone and ceftazidime, thus conferring resistance to these antibiotics. The polypeptide is Beta-lactamase CTX-M-97 (bla) (Escherichia coli).